We begin with the raw amino-acid sequence, 263 residues long: UDP-N-acetylenolpyruvoylglucosamine reductase (263 aa).

Arg-146 is an active-site residue. Ser-188 serves as the catalytic Proton donor. The active site involves Glu-258.

Belongs to the MurB family. The cofactor is FAD.

It localises to the cytoplasm. The enzyme catalyses UDP-N-acetyl-alpha-D-muramate + NADP(+) = UDP-N-acetyl-3-O-(1-carboxyvinyl)-alpha-D-glucosamine + NADPH + H(+). The protein operates within cell wall biogenesis; peptidoglycan biosynthesis. Functionally, cell wall formation. In Helicobacter hepaticus (strain ATCC 51449 / 3B1), this protein is UDP-N-acetylenolpyruvoylglucosamine reductase.